Consider the following 95-residue polypeptide: Nucleoid-associated protein MARTH_orf159 (95 aa).

This sequence belongs to the YbaB/EbfC family. In terms of assembly, homodimer.

Its subcellular location is the cytoplasm. The protein localises to the nucleoid. In terms of biological role, binds to DNA and alters its conformation. May be involved in regulation of gene expression, nucleoid organization and DNA protection. The protein is Nucleoid-associated protein MARTH_orf159 of Metamycoplasma arthritidis (strain 158L3-1) (Mycoplasma arthritidis).